Reading from the N-terminus, the 264-residue chain is [LysW]-aminoadipate/[LysW]-glutamate kinase (264 aa).

Substrate contacts are provided by residues 35-36, arginine 62, and asparagine 167; that span reads GG.

The protein belongs to the acetylglutamate kinase family. LysZ subfamily.

Its subcellular location is the cytoplasm. It carries out the reaction [amino-group carrier protein]-C-terminal-N-(1,4-dicarboxybutan-1-yl)-L-glutamine + ATP = [amino-group carrier protein]-C-terminal-N-(1-carboxy-5-phosphooxy-5-oxopentan-1-yl)-L-glutamine + ADP. The enzyme catalyses [amino-group carrier protein]-C-terminal-gamma-(L-glutamyl)-L-glutamate + ATP = [amino-group carrier protein]-C-terminal-gamma-(5-phospho-L-glutamyl)-L-glutamate + ADP. Its pathway is amino-acid biosynthesis; L-lysine biosynthesis via AAA pathway; L-lysine from L-alpha-aminoadipate (Thermus route): step 2/5. It functions in the pathway amino-acid biosynthesis; L-arginine biosynthesis. Involved in both the arginine and lysine biosynthetic pathways. Phosphorylates the LysW-bound precursors glutamate (for arginine biosynthesis), respectively alpha-aminoadipate (for lysine biosynthesis). In Saccharolobus islandicus (strain L.S.2.15 / Lassen #1) (Sulfolobus islandicus), this protein is [LysW]-aminoadipate/[LysW]-glutamate kinase.